The primary structure comprises 472 residues: Pyridine nucleotide-disulfide oxidoreductase domain-containing protein 1 (472 aa).

The protein belongs to the class-I pyridine nucleotide-disulfide oxidoreductase family. PYROXD1 subfamily. FAD is required as a cofactor.

Functionally, probable oxidoreductase. The protein is Pyridine nucleotide-disulfide oxidoreductase domain-containing protein 1 of Drosophila melanogaster (Fruit fly).